A 245-amino-acid polypeptide reads, in one-letter code: tRNA pseudouridine synthase A (245 aa).

D52 functions as the Nucleophile in the catalytic mechanism. Y110 provides a ligand contact to substrate.

The protein belongs to the tRNA pseudouridine synthase TruA family. Homodimer.

It carries out the reaction uridine(38/39/40) in tRNA = pseudouridine(38/39/40) in tRNA. Formation of pseudouridine at positions 38, 39 and 40 in the anticodon stem and loop of transfer RNAs. This chain is tRNA pseudouridine synthase A, found in Ruminiclostridium cellulolyticum (strain ATCC 35319 / DSM 5812 / JCM 6584 / H10) (Clostridium cellulolyticum).